Reading from the N-terminus, the 550-residue chain is Chaperonin GroEL (550 aa).

ATP is bound by residues Thr-30–Pro-33, Lys-51, Asp-87–Thr-91, Gly-415, Asn-479–Ala-481, and Asp-495.

The protein belongs to the chaperonin (HSP60) family. Forms a cylinder of 14 subunits composed of two heptameric rings stacked back-to-back. Interacts with the co-chaperonin GroES.

Its subcellular location is the cytoplasm. The catalysed reaction is ATP + H2O + a folded polypeptide = ADP + phosphate + an unfolded polypeptide.. Together with its co-chaperonin GroES, plays an essential role in assisting protein folding. The GroEL-GroES system forms a nano-cage that allows encapsulation of the non-native substrate proteins and provides a physical environment optimized to promote and accelerate protein folding. The chain is Chaperonin GroEL from Polaromonas sp. (strain JS666 / ATCC BAA-500).